The primary structure comprises 450 residues: Probable ECA polymerase (450 aa).

The next 11 helical transmembrane spans lie at 6–26 (FSGL…LTWF), 37–57 (VFFS…TSVL), 63–83 (VGVA…CFYA), 120–140 (LMGI…FLLF), 155–175 (GVAL…IYFL), 181–201 (AWLF…MIVG), 207–227 (IIIA…ISLW), 228–248 (MLVA…LKRY), 341–361 (LVVM…GLII), 378–398 (YKAA…IVLA), and 410–430 (VFFL…FWLF).

This sequence belongs to the WzyE family. Probably part of a complex composed of WzxE, WzyE and WzzE.

Its subcellular location is the cell inner membrane. The protein operates within bacterial outer membrane biogenesis; enterobacterial common antigen biosynthesis. Probably involved in the polymerization of enterobacterial common antigen (ECA) trisaccharide repeat units. The protein is Probable ECA polymerase of Citrobacter koseri (strain ATCC BAA-895 / CDC 4225-83 / SGSC4696).